Consider the following 261-residue polypeptide: Global transcriptional regulator CodY (261 aa).

Positions 1-159 (MPNLLEKTRK…ASTVVGIQLL (159 aa)) are GAF domain. The segment at residues 207–226 (ASVIADRIGITRSVIVNALR) is a DNA-binding region (H-T-H motif).

It belongs to the CodY family.

Its subcellular location is the cytoplasm. Functionally, DNA-binding global transcriptional regulator which is involved in the adaptive response to starvation and acts by directly or indirectly controlling the expression of numerous genes in response to nutrient availability. During rapid exponential growth, CodY is highly active and represses genes whose products allow adaptation to nutrient depletion. The sequence is that of Global transcriptional regulator CodY from Streptococcus agalactiae serotype III (strain NEM316).